We begin with the raw amino-acid sequence, 288 residues long: Bifunctional protein FolD (288 aa).

NADP(+)-binding positions include 166 to 168 (GAS) and I232.

The protein belongs to the tetrahydrofolate dehydrogenase/cyclohydrolase family. In terms of assembly, homodimer.

The enzyme catalyses (6R)-5,10-methylene-5,6,7,8-tetrahydrofolate + NADP(+) = (6R)-5,10-methenyltetrahydrofolate + NADPH. The catalysed reaction is (6R)-5,10-methenyltetrahydrofolate + H2O = (6R)-10-formyltetrahydrofolate + H(+). Its pathway is one-carbon metabolism; tetrahydrofolate interconversion. Its function is as follows. Catalyzes the oxidation of 5,10-methylenetetrahydrofolate to 5,10-methenyltetrahydrofolate and then the hydrolysis of 5,10-methenyltetrahydrofolate to 10-formyltetrahydrofolate. The chain is Bifunctional protein FolD from Klebsiella pneumoniae (strain 342).